The chain runs to 309 residues: Polyprenal reductase (309 aa).

The next 7 helical transmembrane spans lie at 12–32 (LPLYLLVSTLGLAISCCFTLI), 72–92 (FYAIGLLTLFICLHTVHSLIY), 114–134 (IPPITPSTSILALLLISLHVA), 151–171 (MNLFHYAVGIVHYIILPISIM), 184–204 (LHVSIDDISLTQWAGAVLFWI), 242–262 (LVSCPHFLFEICIYLSLFLVI), and 270–290 (FIIMFVCINQTFAALITHSWY).

It belongs to the steroid 5-alpha reductase family. Polyprenal reductase subfamily.

Its subcellular location is the endoplasmic reticulum membrane. The enzyme catalyses a di-trans,poly-cis-dolichal + NADP(+) = a di-trans,poly-cis-polyprenal + NADPH + H(+). It functions in the pathway protein modification; protein glycosylation. Functionally, plays a key role in early steps of protein N-linked glycosylation by being involved in the conversion of polyprenol into dolichol. Acts as a polyprenal reductase that mediates the reduction of polyprenal into dolichal in a NADP-dependent mechanism. Dolichols are required for the synthesis of dolichol-linked monosaccharides and the oligosaccharide precursor used for N-glycosylation. The chain is Polyprenal reductase from Caenorhabditis elegans.